The primary structure comprises 269 residues: UPF0329 protein ECU04_1660 (269 aa).

The segment covering 1–12 (MEERERGKEKGS) has biased composition (basic and acidic residues). The disordered stretch occupies residues 1–74 (MEERERGKEK…SPKEKSKGEE (74 aa)). Positions 13–23 (KGKGRKKRGKK) are enriched in basic residues. Positions 24 to 36 (GAGEAKEESKEED) are enriched in basic and acidic residues. The span at 37–51 (RGEEEEESVEADVPV) shows a compositional bias: acidic residues.

This sequence belongs to the UPF0329 family.

This chain is UPF0329 protein ECU04_1660, found in Encephalitozoon cuniculi (strain GB-M1) (Microsporidian parasite).